Consider the following 609-residue polypeptide: MYLSTVLFPLLALNLGLSHARFVRETLELTWEYGSPNGGTPREMVFTNGEYPGPDLIFDEDDDVEVLVINNLPFNTTVHWHGLEMRETPEADGVPGLTQTPIEPGATFTYRFRAYPAGTFWYHSHYKGLMQDGQVGAMYIRRKPDALRPYAVITEDPRELAEIQYAEDNPYLMLATDWTYLTSAEYHNIEVESGYNVFCVDSLLINGRGSVYCPGYQYLEEVSDDGLTAVLEGTHLTEKGCLQPDLHNVQGDYGPWNLSAVPTEVVFNCTPSSVEPPVIYVDPEFNGWVSLNFIGGAAQKAITFSVDNHPMWVYEVDGQFVEPREVEMVGVYSGARYAVMIKLDQTPGDYAIRIAVNGGDQVMSVYAILSYVNQDWIHRENVPKAAIGPHTDTVGYMNYGGGNTSADVRQLLFTENLPAFGVPPPPPSSEVSTTLRTGMIRVNNSYSWSLGNNVLYEPEMTSSTPLLFEPDPLAVIAPKYALTTENNTWVDIVLEITADPRDLIHPPHPIHKHGNRAYIIGNGVGKFRWENVSAAEAEVPDLFYVNETAALRDTFVTDFFDSRLMDGAWIVIRYFVQDKFPSILHCHIASHQMGGMALALLDGVDVWDS.

Residues 1–20 (MYLSTVLFPLLALNLGLSHA) form the signal peptide. In terms of domain architecture, Plastocyanin-like 1 spans 45-141 (VFTNGEYPGP…DGQVGAMYIR (97 aa)). Asn-75 carries an N-linked (GlcNAc...) asparagine glycan. 4 residues coordinate Cu cation: His-79, His-81, His-123, and His-125. Asn-257 is a glycosylation site (N-linked (GlcNAc...) asparagine). A Plastocyanin-like 2 domain is found at 270-372 (TPSSVEPPVI…MSVYAILSYV (103 aa)). 3 N-linked (GlcNAc...) asparagine glycosylation sites follow: Asn-403, Asn-443, and Asn-486. One can recognise a Plastocyanin-like 3 domain in the interval 463-602 (STPLLFEPDP…MGGMALALLD (140 aa)). Cu cation is bound by residues His-508, His-511, and His-513. N-linked (GlcNAc...) asparagine glycans are attached at residues Asn-531 and Asn-546. Residues His-585, Cys-586, His-587, and His-591 each coordinate Cu cation.

This sequence belongs to the multicopper oxidase family. Requires Cu cation as cofactor.

The protein resides in the secreted. The catalysed reaction is 4 hydroquinone + O2 = 4 benzosemiquinone + 2 H2O. Functionally, required for the conversion of the yellow polyketide pigment synthesized by wA to the conidial green pigment. This Emericella nidulans (strain FGSC A4 / ATCC 38163 / CBS 112.46 / NRRL 194 / M139) (Aspergillus nidulans) protein is Laccase-1 (yA).